Reading from the N-terminus, the 287-residue chain is Protoheme IX farnesyltransferase (287 aa).

7 consecutive transmembrane segments (helical) span residues 19–39, 100–120, 134–154, 162–182, 212–232, 233–253, and 267–287; these read LMVA…VTIT, MVLC…IVAV, FALL…WLAV, MLVV…WLHA, VWFH…LLEG, VGMR…AMLA, and VLCA…VSLF.

Belongs to the UbiA prenyltransferase family. Protoheme IX farnesyltransferase subfamily.

It localises to the cell inner membrane. The catalysed reaction is heme b + (2E,6E)-farnesyl diphosphate + H2O = Fe(II)-heme o + diphosphate. It participates in porphyrin-containing compound metabolism; heme O biosynthesis; heme O from protoheme: step 1/1. Its function is as follows. Converts heme B (protoheme IX) to heme O by substitution of the vinyl group on carbon 2 of heme B porphyrin ring with a hydroxyethyl farnesyl side group. The chain is Protoheme IX farnesyltransferase from Nitratidesulfovibrio vulgaris (strain DP4) (Desulfovibrio vulgaris).